Reading from the N-terminus, the 211-residue chain is ATP phosphoribosyltransferase (211 aa).

Belongs to the ATP phosphoribosyltransferase family. Short subfamily. As to quaternary structure, heteromultimer composed of HisG and HisZ subunits.

It localises to the cytoplasm. It carries out the reaction 1-(5-phospho-beta-D-ribosyl)-ATP + diphosphate = 5-phospho-alpha-D-ribose 1-diphosphate + ATP. The protein operates within amino-acid biosynthesis; L-histidine biosynthesis; L-histidine from 5-phospho-alpha-D-ribose 1-diphosphate: step 1/9. In terms of biological role, catalyzes the condensation of ATP and 5-phosphoribose 1-diphosphate to form N'-(5'-phosphoribosyl)-ATP (PR-ATP). Has a crucial role in the pathway because the rate of histidine biosynthesis seems to be controlled primarily by regulation of HisG enzymatic activity. The protein is ATP phosphoribosyltransferase of Lacticaseibacillus casei (strain BL23) (Lactobacillus casei).